The primary structure comprises 1437 residues: uncharacterized protein (1437 aa).

The first 25 residues, methionine 1 to asparagine 25, serve as a signal peptide directing secretion. Residues glutamine 26–tryptophan 1326 lie on the Extracellular side of the membrane. Asparagine 103, asparagine 315, asparagine 364, asparagine 492, asparagine 605, asparagine 676, and asparagine 914 each carry an N-linked (GlcNAc...) asparagine glycan. Positions alanine 193–valine 356 constitute an NIDO domain. Residues valine 648–arginine 829 form the AMOP domain. A helical membrane pass occupies residues leucine 1327–phenylalanine 1347. The Cytoplasmic portion of the chain corresponds to tryptophan 1348 to valine 1437. The disordered stretch occupies residues proline 1394–proline 1419.

Its subcellular location is the membrane. This is an uncharacterized protein from Caenorhabditis elegans.